The primary structure comprises 249 residues: Probable transcriptional regulatory protein LIC_12886 (249 aa).

Belongs to the TACO1 family.

It is found in the cytoplasm. This Leptospira interrogans serogroup Icterohaemorrhagiae serovar copenhageni (strain Fiocruz L1-130) protein is Probable transcriptional regulatory protein LIC_12886.